Here is a 229-residue protein sequence, read N- to C-terminus: MIDHTHLRLFQFCDSQFPTGAFSHSFGLETYIQRNIIHDDHTFIAWLKMFLQEQLTYSDGLAMRLVYDALENDDTQKVLHIDKLMFVQNLPKETRVGAKQMGTRMVKLALELYNSPWIAWYHQQMQDKKAKLNPAICFTMLGHHLGVDIETIIDYYLYQNVSSLTQNAVRAIPLGQTAGQKIVTHMIPYIEGTRKQIFELKEADFGMTAPGLELNQMAHENVNVRIFIS.

Belongs to the UreF family. In terms of assembly, ureD, UreF and UreG form a complex that acts as a GTP-hydrolysis-dependent molecular chaperone, activating the urease apoprotein by helping to assemble the nickel containing metallocenter of UreC. The UreE protein probably delivers the nickel.

The protein resides in the cytoplasm. Functionally, required for maturation of urease via the functional incorporation of the urease nickel metallocenter. This chain is Urease accessory protein UreF, found in Staphylococcus aureus (strain USA300).